The sequence spans 818 residues: Histone H2A deubiquitinase MYSM1 (818 aa).

One can recognise an SANT domain in the interval 107-158 (SSPVKWTKEEKNLFEQGLATFGRRWTSIARLIGSRSVLQVKNYARHYFKNKC). Residues 344–442 (IKPPDQELEI…FGCEQAIYNR (99 aa)) form the SWIRM domain. The region spanning 548–680 (VKVSCEAMLV…PHPQSQVACL (133 aa)) is the MPN domain. Zn(2+) is bound by residues His627, His629, and Asp640. The JAMM motif signature appears at 627–640 (HSHPAFDPNPSIRD). Residues 745–749 (LQKLL) carry the LXXLL motif motif.

This sequence belongs to the peptidase M67A family. MYSM1 subfamily.

The protein localises to the nucleus. Functionally, metalloprotease that specifically deubiquitinates monoubiquitinated histone H2A, a specific tag for epigenetic transcriptional repression, thereby acting as a coactivator. Preferentially deubiquitinates monoubiquitinated H2A in hyperacetylated nucleosomes. Deubiquitination of histone H2A leads to facilitate the phosphorylation and dissociation of histone H1 from the nucleosome. Acts as a coactivator by participating in the initiation and elongation steps of androgen receptor (AR)-induced gene activation. This is Histone H2A deubiquitinase MYSM1 (mysm1) from Xenopus laevis (African clawed frog).